The sequence spans 333 residues: Electron transfer flavoprotein subunit alpha, mitochondrial (333 aa).

The transit peptide at 1–19 directs the protein to the mitochondrion; it reads MFRAAAPGQLRRAASLLRF. The tract at residues 20–204 is domain I; that stretch reads QSTLVIAEHA…EISEWLDQKL (185 aa). Lys-59 carries the N6-acetyllysine; alternate modification. N6-succinyllysine; alternate is present on Lys-59. An N6-acetyllysine modification is found at Lys-62. Residue Lys-69 is modified to N6-acetyllysine; alternate. N6-succinyllysine; alternate is present on Lys-69. Lys-75 carries the post-translational modification N6-acetyllysine. A Phosphothreonine modification is found at Thr-93. 2 positions are modified to N6-acetyllysine: Lys-101 and Lys-139. Ser-140 is subject to Phosphoserine. Residue Lys-158 is modified to N6-acetyllysine; alternate. Lys-158 is subject to N6-succinyllysine; alternate. Residue Lys-164 is modified to N6-acetyllysine. Lys-187 bears the N6-succinyllysine mark. Lys-203 carries the post-translational modification N6-acetyllysine; alternate. An N6-succinyllysine; alternate modification is found at Lys-203. Residues 205–333 are domain II; the sequence is TKSDRPELTG…PEMTEILKKK (129 aa). Lys-216 is subject to N6-succinyllysine. Residue Arg-223 participates in FAD binding. Lys-226 and Lys-232 each carry N6-acetyllysine; alternate. An N6-succinyllysine; alternate mark is found at Lys-226 and Lys-232. Residues Ser-248, 263–266, 281–286, and Asn-300 each bind FAD; these read VGQT and SGAIQH. Residue Lys-301 is modified to N6-succinyllysine. 318-319 lines the FAD pocket; sequence DL.

The protein belongs to the ETF alpha-subunit/FixB family. As to quaternary structure, heterodimer composed of ETFA and ETFB. Identified in a complex that contains ETFA, ETFB and ETFRF1. Interaction with ETFRF1 promotes dissociation of the bound FAD and loss of electron transfer activity. Interacts with TASOR. Requires FAD as cofactor.

The protein localises to the mitochondrion matrix. In terms of biological role, heterodimeric electron transfer flavoprotein that accepts electrons from several mitochondrial dehydrogenases, including acyl-CoA dehydrogenases, glutaryl-CoA and sarcosine dehydrogenase. It transfers the electrons to the main mitochondrial respiratory chain via ETF-ubiquinone oxidoreductase (ETF dehydrogenase). Required for normal mitochondrial fatty acid oxidation and normal amino acid metabolism. The polypeptide is Electron transfer flavoprotein subunit alpha, mitochondrial (ETFA) (Pongo abelii (Sumatran orangutan)).